We begin with the raw amino-acid sequence, 232 residues long: 2,3,4,5-tetrahydropyridine-2,6-dicarboxylate N-acetyltransferase (232 aa).

It belongs to the transferase hexapeptide repeat family. DapH subfamily.

The catalysed reaction is (S)-2,3,4,5-tetrahydrodipicolinate + acetyl-CoA + H2O = L-2-acetamido-6-oxoheptanedioate + CoA. Its pathway is amino-acid biosynthesis; L-lysine biosynthesis via DAP pathway; LL-2,6-diaminopimelate from (S)-tetrahydrodipicolinate (acetylase route): step 1/3. In terms of biological role, catalyzes the transfer of an acetyl group from acetyl-CoA to tetrahydrodipicolinate. This is 2,3,4,5-tetrahydropyridine-2,6-dicarboxylate N-acetyltransferase from Streptococcus gordonii (strain Challis / ATCC 35105 / BCRC 15272 / CH1 / DL1 / V288).